We begin with the raw amino-acid sequence, 599 residues long: NADH-quinone oxidoreductase subunit C/D (599 aa).

Residues 1–189 form an NADH dehydrogenase I subunit C region; the sequence is MTDLTTHDLA…DPFELTKQKE (189 aa). Positions 213–599 are NADH dehydrogenase I subunit D; it reads DFMFLNLGPN…IDFVMSDVDR (387 aa).

This sequence in the N-terminal section; belongs to the complex I 30 kDa subunit family. In the C-terminal section; belongs to the complex I 49 kDa subunit family. As to quaternary structure, NDH-1 is composed of 13 different subunits. Subunits NuoB, CD, E, F, and G constitute the peripheral sector of the complex.

Its subcellular location is the cell inner membrane. It carries out the reaction a quinone + NADH + 5 H(+)(in) = a quinol + NAD(+) + 4 H(+)(out). Its function is as follows. NDH-1 shuttles electrons from NADH, via FMN and iron-sulfur (Fe-S) centers, to quinones in the respiratory chain. The immediate electron acceptor for the enzyme in this species is believed to be ubiquinone. Couples the redox reaction to proton translocation (for every two electrons transferred, four hydrogen ions are translocated across the cytoplasmic membrane), and thus conserves the redox energy in a proton gradient. The protein is NADH-quinone oxidoreductase subunit C/D of Pectobacterium atrosepticum (strain SCRI 1043 / ATCC BAA-672) (Erwinia carotovora subsp. atroseptica).